The sequence spans 331 residues: MTEPLDAALRPKSLAEYVGQARLKEKLGVYLQAAKGRKEALDHTLLFGPPGLGKTTLAHIIAAELGVNIRVTSGPAIEKPGDLAAILTNSLEEGDVLFIDEIHRLGRVAEEHLYPAMEDFKLDIVLGQGPAARTIELPLPRFTLVGATTRPGLITAPMRSRFGIIEHLEYYTPEEIGTNLLRDARLLGFGLTEEAAIEIGARSRGTMRIAKRLLRRVRDYADVAGEKTIELERAQDALDKLGLDTAGLDERDKKYLETLIHRFAGGPVGVDTLATAISEDALTLEDVYEPYLIQLGFIKRTPRGRVATAHAYDHLGLPVGAAESDLGLYTN.

A large ATPase domain (RuvB-L) region spans residues 1–171 (MTEPLDAALR…FGIIEHLEYY (171 aa)). Residues Leu9, Arg10, Gly51, Lys54, Thr55, Thr56, 118–120 (EDF), Arg161, Tyr171, and Arg208 contribute to the ATP site. Thr55 lines the Mg(2+) pocket. Positions 172–242 (TPEEIGTNLL…RAQDALDKLG (71 aa)) are small ATPAse domain (RuvB-S). The segment at 245–331 (TAGLDERDKK…AESDLGLYTN (87 aa)) is head domain (RuvB-H). DNA contacts are provided by Arg300 and Arg305.

Belongs to the RuvB family. In terms of assembly, homohexamer. Forms an RuvA(8)-RuvB(12)-Holliday junction (HJ) complex. HJ DNA is sandwiched between 2 RuvA tetramers; dsDNA enters through RuvA and exits via RuvB. An RuvB hexamer assembles on each DNA strand where it exits the tetramer. Each RuvB hexamer is contacted by two RuvA subunits (via domain III) on 2 adjacent RuvB subunits; this complex drives branch migration. In the full resolvosome a probable DNA-RuvA(4)-RuvB(12)-RuvC(2) complex forms which resolves the HJ.

The protein localises to the cytoplasm. The enzyme catalyses ATP + H2O = ADP + phosphate + H(+). Its function is as follows. The RuvA-RuvB-RuvC complex processes Holliday junction (HJ) DNA during genetic recombination and DNA repair, while the RuvA-RuvB complex plays an important role in the rescue of blocked DNA replication forks via replication fork reversal (RFR). RuvA specifically binds to HJ cruciform DNA, conferring on it an open structure. The RuvB hexamer acts as an ATP-dependent pump, pulling dsDNA into and through the RuvAB complex. RuvB forms 2 homohexamers on either side of HJ DNA bound by 1 or 2 RuvA tetramers; 4 subunits per hexamer contact DNA at a time. Coordinated motions by a converter formed by DNA-disengaged RuvB subunits stimulates ATP hydrolysis and nucleotide exchange. Immobilization of the converter enables RuvB to convert the ATP-contained energy into a lever motion, pulling 2 nucleotides of DNA out of the RuvA tetramer per ATP hydrolyzed, thus driving DNA branch migration. The RuvB motors rotate together with the DNA substrate, which together with the progressing nucleotide cycle form the mechanistic basis for DNA recombination by continuous HJ branch migration. Branch migration allows RuvC to scan DNA until it finds its consensus sequence, where it cleaves and resolves cruciform DNA. This is Holliday junction branch migration complex subunit RuvB from Deinococcus geothermalis (strain DSM 11300 / CIP 105573 / AG-3a).